Reading from the N-terminus, the 363-residue chain is MKRSLNENSARSTAGCLPVPLFNQKKRNRQPLTSNPLKDDPGISTPSDNYDFPPLPTDWAWEAMNAELAPVMKTVDTGQIPHSVPRPLRSQDSIFNSIQSNTERSQGGWSYSDNNKNTSLKTWNKNDFKPQCKRTNLVANDGKNSCPMSSGAQQQKQFGIPEPPNLPRNKETELLRQTHSSKISGSTMRGLDKNSALQTFKPNFQQNQYKKQMLDDIPEDNTLKETSLFQLQFKEKANSLRIISAVIESMKYWREHAQKTVLLFEVLAVLDSAVTPGPYYSKTFLMRDGKNTLPCVFFEIDRELPRLIRGRVHRCVGNYDQKKNIFKCVSVRPASVSEQKSFQAFVKIADVEMRYYINVMNET.

Composition is skewed to polar residues over residues 1 to 12 (MKRSLNENSARS) and 145 to 157 (SCPM…QQKQ). Disordered stretches follow at residues 1 to 51 (MKRS…DNYD) and 145 to 169 (SCPM…LPRN).

In terms of assembly, component of a multiprotein complex with MEIOB and RPA2. Interacts with MEIOB. Interacts with the complex BRME1:HSF2BP:BRCA2. In terms of tissue distribution, expressed in testis.

It localises to the chromosome. Functionally, meiosis-specific protein required for homologous recombination in meiosis I. The protein is Spermatogenesis-associated protein 22 (SPATA22) of Macaca fascicularis (Crab-eating macaque).